The chain runs to 432 residues: MEKITLAPISRVEGEINLPGSKSLSNRALLLAALAKGTTKVTNLLDSDDIRHMLNALKALGVNYSLSEDKTVCTVEGVGGAFNWKNGLALFLGNAGTAMRPLTAALCLKGATEAEVVLTGEPRMKERPIKHLVDALRQAGASVQYLENEGYPPVAIRNSGLKGGKVQIDGSISSQFLTALLMAAPLAEGDMEIEIIGELVSKPYIDITLAMMKDFGVKVENRNYQTFVVKGNQSYLSPEKYLVEGDASSASYFLAAGAIKGKVKVTGIGKNSIQGDRLFANVLEAMGAKITWGDDFIQAEQGKLKGVDMDMNHIPDAAMTIATAALFAEGETVIRNIYNWRVKETDRLTAMATELRKVGATVEEGEDFIRIQPLPLTQFQHAEIATYNDHRMAMCFSLIALSDTPVTILDPKCTAKTFPTYFTEFEKLSERT.

Positions 22, 23, and 27 each coordinate 3-phosphoshikimate. K22 serves as a coordination point for phosphoenolpyruvate. Residues G96 and R127 each coordinate phosphoenolpyruvate. 7 residues coordinate 3-phosphoshikimate: S173, S174, Q175, S201, D316, N339, and K343. Q175 contributes to the phosphoenolpyruvate binding site. Catalysis depends on D316, which acts as the Proton acceptor. Phosphoenolpyruvate-binding residues include R347, R391, and K416.

This sequence belongs to the EPSP synthase family. Monomer.

The protein localises to the cytoplasm. It catalyses the reaction 3-phosphoshikimate + phosphoenolpyruvate = 5-O-(1-carboxyvinyl)-3-phosphoshikimate + phosphate. It functions in the pathway metabolic intermediate biosynthesis; chorismate biosynthesis; chorismate from D-erythrose 4-phosphate and phosphoenolpyruvate: step 6/7. In terms of biological role, catalyzes the transfer of the enolpyruvyl moiety of phosphoenolpyruvate (PEP) to the 5-hydroxyl of shikimate-3-phosphate (S3P) to produce enolpyruvyl shikimate-3-phosphate and inorganic phosphate. This chain is 3-phosphoshikimate 1-carboxyvinyltransferase, found in Actinobacillus pleuropneumoniae serotype 7 (strain AP76).